The chain runs to 431 residues: Nocturnin (431 aa).

Residues 1–75 constitute a mitochondrion transit peptide; it reads MFHSPRRLCS…SMGTGTSRLY (75 aa). Residues 20-31 show a composition bias toward low complexity; the sequence is LRRLPAPGLRRP. Positions 20 to 41 are disordered; it reads LRRLPAPGLRRPLSPPAAVPRP. Pro residues predominate over residues 32–41; it reads LSPPAAVPRP. A Mg(2+)-binding site is contributed by E195. Substrate is bound by residues E195, 219–221, N263, 286–289, and 324–326; these read KPW, HLKA, and DFN. The tract at residues 343 to 353 is interaction with PPARG; the sequence is NLNSAYKLLSA. H414 is a substrate binding site.

The protein belongs to the CCR4/nocturin family. Interacts with PPARG. Requires Mg(2+) as cofactor. In terms of tissue distribution, adipose tissue. Expression is higher in subcutaneous adipose tissue as compared to visceral adipose tissue.

It is found in the cytoplasm. The protein localises to the nucleus. Its subcellular location is the perinuclear region. It localises to the mitochondrion. It carries out the reaction NADP(+) + H2O = phosphate + NAD(+). The catalysed reaction is NADPH + H2O = phosphate + NADH. Its function is as follows. Phosphatase which catalyzes the conversion of NADP(+) to NAD(+) and of NADPH to NADH. Shows a small preference for NADPH over NADP(+). Represses translation and promotes degradation of target mRNA molecules. Plays an important role in post-transcriptional regulation of metabolic genes under circadian control. Exerts a rhythmic post-transcriptional control of genes necessary for metabolic functions including nutrient absorption, glucose/insulin sensitivity, lipid metabolism, adipogenesis, inflammation and osteogenesis. Plays an important role in favoring adipogenesis over osteoblastogenesis and acts as a key regulator of the adipogenesis/osteogenesis balance. Promotes adipogenesis by facilitating PPARG nuclear translocation which activates its transcriptional activity. Regulates circadian expression of NOS2 in the liver and negatively regulates the circadian expression of IGF1 in the bone. Critical for proper development of early embryos. The sequence is that of Nocturnin from Homo sapiens (Human).